A 367-amino-acid chain; its full sequence is C-C chemokine receptor type 9 (367 aa).

The Extracellular segment spans residues 1-46 (MVPTEATSLILNPSDDYGYDGTPPMEYDTNLTDYFCEKSHVRQFAG). The N-linked (GlcNAc...) asparagine glycan is linked to asparagine 30. 2 disulfide bridges follow: cysteine 36–cysteine 287 and cysteine 117–cysteine 196. Residues 47–72 (HFLPPLYWLVFIVGAVGNSLVILVYW) form a helical membrane-spanning segment. Over 73–83 (YCTRVKTMTDM) the chain is Cytoplasmic. Residues 84 to 107 (FLLNLAIADLLFLTTLPFWAIAAA) form a helical membrane-spanning segment. Residues 108 to 118 (DQWKFQTFMCK) lie on the Extracellular side of the membrane. Residues 119–148 (VVNSMYKMNFYSCVLLIMCISVDRYIAIAQ) form a helical membrane-spanning segment. Residues 149-157 (AMRAQMWRQ) are Cytoplasmic-facing. Residues 158 to 183 (KRLLYSKMVCFTIWVMAAALCLPELL) traverse the membrane as a helical segment. Over 184–206 (YSQVKEEHGTAICTVVYSSNEST) the chain is Extracellular. Asparagine 203 is a glycosylation site (N-linked (GlcNAc...) asparagine). A helical membrane pass occupies residues 207-241 (KLKSAVLTLKVTLGFFLPFVVMACCYAIIIHTLIR). The Cytoplasmic segment spans residues 242 to 246 (AKKSS). Residues 247–281 (KHKALKVTITVLTVFVLSQFPHNCVLLVQTIDAYA) form a helical membrane-spanning segment. The Extracellular portion of the chain corresponds to 282 to 288 (TFISSCA). Residues 289–319 (LSIKIDICFQVTQTVAFFHSCLNPVLYVFVG) traverse the membrane as a helical segment. At 320–367 (ERFRRDLVKTLKNLGCISQAQWVSFTRREGSLKLSSMLLETTSGALSF) the chain is on the cytoplasmic side.

Belongs to the G-protein coupled receptor 1 family.

It localises to the cell membrane. Receptor for chemokine SCYA25/TECK. Subsequently transduces a signal by increasing the intracellular calcium ions level. The polypeptide is C-C chemokine receptor type 9 (CCR9) (Ovis aries (Sheep)).